Here is a 403-residue protein sequence, read N- to C-terminus: Large ribosomal subunit protein uL3 (403 aa).

The tract at residues 1-37 (MSHRKFSAPRHGSLGFLPRKRSSRHRGKVKSFPKDDP) is disordered. Ser13 bears the Phosphoserine mark. A compositionally biased stretch (basic residues) spans 18 to 31 (PRKRSSRHRGKVKS). Lys39 participates in a covalent cross-link: Glycyl lysine isopeptide (Lys-Gly) (interchain with G-Cter in SUMO2). Position 136 is an N6-acetyllysine (Lys136). Glycyl lysine isopeptide (Lys-Gly) (interchain with G-Cter in SUMO2) cross-links involve residues Lys224 and Lys226. At His245 the chain carries Tele-methylhistidine. An N6-acetyllysine; alternate mark is found at Lys286 and Lys294. A Glycyl lysine isopeptide (Lys-Gly) (interchain with G-Cter in SUMO2); alternate cross-link involves residue Lys286. A Glycyl lysine isopeptide (Lys-Gly) (interchain with G-Cter in SUMO1); alternate cross-link involves residue Lys294. The residue at position 304 (Ser304) is a Phosphoserine. Lys366 is subject to N6-acetyllysine; alternate. Residue Lys366 forms a Glycyl lysine isopeptide (Lys-Gly) (interchain with G-Cter in SUMO2); alternate linkage. Lys373 is subject to N6-acetyllysine. Glycyl lysine isopeptide (Lys-Gly) (interchain with G-Cter in SUMO2) cross-links involve residues Lys386, Lys393, and Lys399.

The protein belongs to the universal ribosomal protein uL3 family. Component of the large ribosomal subunit. Interacts with DHX33. Post-translationally, constitutively monomethylated at His-245 by METTL18. Methylation at His-245 regulates translation elongation by slowing ribosome traversal on tyrosine codons: slower elongation provides enough time for proper folding of synthesized proteins and prevents cellular aggregation of tyrosine-rich proteins. It is not required for incorporation of RPL3 into ribosomes.

The protein localises to the nucleus. It localises to the nucleolus. The protein resides in the cytoplasm. Component of the large ribosomal subunit. The ribosome is a large ribonucleoprotein complex responsible for the synthesis of proteins in the cell. This Rattus norvegicus (Rat) protein is Large ribosomal subunit protein uL3 (Rpl3).